Consider the following 725-residue polypeptide: uncharacterized protein (725 aa).

The region spanning glycine 363 to cysteine 556 is the FtsK domain. Glycine 382–serine 389 contacts ATP.

It belongs to the FtsK/SpoIIIE/SftA family.

Probable DNA motor protein. May track DNA in a ATP-dependent manner by generating positive supercoils in front of it and negative supercoils behind it. This is an uncharacterized protein from Nostoc sp. (strain PCC 7120 / SAG 25.82 / UTEX 2576).